The primary structure comprises 270 residues: UPF0354 protein BCG9842_B0431 (270 aa).

Belongs to the UPF0354 family.

The protein is UPF0354 protein BCG9842_B0431 of Bacillus cereus (strain G9842).